A 114-amino-acid chain; its full sequence is MQDIIRQIEAEQLRKDIPDFKPGDTVKVHVKVVEGNRERIQLFEGIVIKRRGGGLSETFTVRRVSYGVAVERTFLVHSPRLDKIEVVRRGRVRRAKLYYLRDLSGKAARIRDKR.

The protein belongs to the bacterial ribosomal protein bL19 family.

In terms of biological role, this protein is located at the 30S-50S ribosomal subunit interface and may play a role in the structure and function of the aminoacyl-tRNA binding site. The protein is Large ribosomal subunit protein bL19 of Heliobacterium modesticaldum (strain ATCC 51547 / Ice1).